The chain runs to 451 residues: Transcription factor TGAL8 (451 aa).

A compositionally biased stretch (polar residues) spans Met-1–Arg-22. Disordered regions lie at residues Met-1–Ser-32 and Phe-70–Leu-151. Residues Lys-141 to Thr-150 show a composition bias toward basic and acidic residues. Residues Asp-147–Phe-191 enclose the bZIP domain. A basic motif region spans residues Lys-149–Lys-169. Residues Leu-175–Ile-189 form a leucine-zipper region. In terms of domain architecture, DOG1 spans Ala-208 to Thr-444.

Belongs to the bZIP family. In terms of assembly, interacts with NPR5/NH4, NH5.1 and NH5.2.

It localises to the nucleus. In terms of biological role, transcriptional regulator involved in defense response. In Oryza sativa subsp. japonica (Rice), this protein is Transcription factor TGAL8.